The primary structure comprises 468 residues: ATP synthase subunit beta (468 aa).

Residue 155–162 (GGAGVGKT) coordinates ATP.

Belongs to the ATPase alpha/beta chains family. In terms of assembly, F-type ATPases have 2 components, CF(1) - the catalytic core - and CF(0) - the membrane proton channel. CF(1) has five subunits: alpha(3), beta(3), gamma(1), delta(1), epsilon(1). CF(0) has three main subunits: a(1), b(2) and c(9-12). The alpha and beta chains form an alternating ring which encloses part of the gamma chain. CF(1) is attached to CF(0) by a central stalk formed by the gamma and epsilon chains, while a peripheral stalk is formed by the delta and b chains.

It localises to the cell inner membrane. The enzyme catalyses ATP + H2O + 4 H(+)(in) = ADP + phosphate + 5 H(+)(out). Functionally, produces ATP from ADP in the presence of a proton gradient across the membrane. The catalytic sites are hosted primarily by the beta subunits. The protein is ATP synthase subunit beta of Thermotoga neapolitana (strain ATCC 49049 / DSM 4359 / NBRC 107923 / NS-E).